A 138-amino-acid chain; its full sequence is 10 kDa chaperonin 1, chloroplastic (138 aa).

The transit peptide at 1–61 (MASSFITVPK…VPQADRVLVR (61 aa)) directs the protein to the chloroplast. The cpn-10 domain stretch occupies residues 50-137 (KVVPQADRVL…CKESDLLAIV (88 aa)).

It belongs to the GroES chaperonin family. Expressed at low levels in germinating seeds, seedlings, rosettes leaves, flowers and siliques.

Its subcellular location is the plastid. It is found in the chloroplast. Functions as a co-chaperone for protein folding in chloroplasts. The protein is 10 kDa chaperonin 1, chloroplastic of Arabidopsis thaliana (Mouse-ear cress).